Reading from the N-terminus, the 461-residue chain is MRVLIKNGTVVNADGQAKQDLLIESGIVRQLGNNISPQLPYEEIDATGCYVFPGGVDVHTHFNIDVGIARSCDDFFTGTRAAACGGTTTIIDHMGFGPNGCRLRHQLEVYRGYAAHKAVIDYSFHGVIQHINHAILDEIPMMVEEGLSSFKLYLTYQYKLNDDEVLQALRRLHESGALTTVHPENDAAIASKRAEFIAAGLTAPRYHALSRPLECEAEAIARMINLAQIAGNAPLYIVHLSNGLGLDYLRLARANHQPVWVETCPQYLLLDERSYDTEDGMKFILSPPLRNVREQDKLWCGISDGAIDVVATDHCTFSMAQRLQISKGDFSRCPNGLPGVENRMQLLFSSGVMTGRISPERFVELTSAMPARLFGLWPQKGLLAPGSDGDVVIIDPRQSQQIQHRHLHDNADYSPWEGFTCQGAIVRTLSRGETIFCDGTFTGKAGRGRFLRRKPFVPPVL.

3 residues coordinate a divalent metal cation: His-59, His-61, and Lys-151. Lys-151 is subject to N6-carboxylysine. Tyr-156 contributes to the substrate binding site. Residues His-182 and His-239 each contribute to the a divalent metal cation site. Ser-286 serves as a coordination point for substrate. Asp-313 is an a divalent metal cation binding site. Asn-335 is a substrate binding site.

This sequence belongs to the metallo-dependent hydrolases superfamily. Hydantoinase/dihydropyrimidinase family. Homotetramer. The cofactor is a divalent metal cation. In terms of processing, carboxylation allows a single lysine to coordinate two divalent metal cations.

The enzyme catalyses D-5-phenylhydantoin + H2O = N-carbamoyl-D-phenylglycine + H(+). Functionally, catalyzes the stereospecific hydrolysis of the cyclic amide bond of D-hydantoin derivatives with an aromatic side chains at the 5'-position. Has no activity on dihydropyrimidines. The physiological function is unknown. The sequence is that of D-phenylhydantoinase from Escherichia coli O7:K1 (strain IAI39 / ExPEC).